A 418-amino-acid chain; its full sequence is 4-hydroxy-3-methylbut-2-en-1-yl diphosphate synthase (flavodoxin) (418 aa).

[4Fe-4S] cluster-binding residues include cysteine 305, cysteine 308, cysteine 351, and glutamate 358.

It belongs to the IspG family. [4Fe-4S] cluster serves as cofactor.

It catalyses the reaction (2E)-4-hydroxy-3-methylbut-2-enyl diphosphate + oxidized [flavodoxin] + H2O + 2 H(+) = 2-C-methyl-D-erythritol 2,4-cyclic diphosphate + reduced [flavodoxin]. It participates in isoprenoid biosynthesis; isopentenyl diphosphate biosynthesis via DXP pathway; isopentenyl diphosphate from 1-deoxy-D-xylulose 5-phosphate: step 5/6. Converts 2C-methyl-D-erythritol 2,4-cyclodiphosphate (ME-2,4cPP) into 1-hydroxy-2-methyl-2-(E)-butenyl 4-diphosphate. The chain is 4-hydroxy-3-methylbut-2-en-1-yl diphosphate synthase (flavodoxin) from Bartonella bacilliformis (strain ATCC 35685 / KC583 / Herrer 020/F12,63).